A 144-amino-acid chain; its full sequence is UPF0225 protein RSc0270 (144 aa).

This sequence belongs to the UPF0225 family.

The protein is UPF0225 protein RSc0270 of Ralstonia nicotianae (strain ATCC BAA-1114 / GMI1000) (Ralstonia solanacearum).